Here is a 244-residue protein sequence, read N- to C-terminus: Small ribosomal subunit protein uS3 (244 aa).

The 69-residue stretch at 39–107 (VREMLRKKLA…PAHINVTEVR (69 aa)) folds into the KH type-2 domain. The tract at residues 213 to 244 (VGQEKQDDSPRNDRNDRGDRGDRPSRPAREAR) is disordered. Basic and acidic residues predominate over residues 216–244 (EKQDDSPRNDRNDRGDRGDRPSRPAREAR).

The protein belongs to the universal ribosomal protein uS3 family. Part of the 30S ribosomal subunit. Forms a tight complex with proteins S10 and S14.

Functionally, binds the lower part of the 30S subunit head. Binds mRNA in the 70S ribosome, positioning it for translation. The sequence is that of Small ribosomal subunit protein uS3 from Xanthomonas oryzae pv. oryzae (strain MAFF 311018).